A 55-amino-acid chain; its full sequence is Large ribosomal subunit protein bL33 (55 aa).

It belongs to the bacterial ribosomal protein bL33 family.

This is Large ribosomal subunit protein bL33 from Cereibacter sphaeroides (strain ATCC 17029 / ATH 2.4.9) (Rhodobacter sphaeroides).